The sequence spans 93 residues: Small ribosomal subunit protein uS19 (93 aa).

Belongs to the universal ribosomal protein uS19 family.

Its function is as follows. Protein S19 forms a complex with S13 that binds strongly to the 16S ribosomal RNA. The polypeptide is Small ribosomal subunit protein uS19 (Latilactobacillus sakei subsp. sakei (strain 23K) (Lactobacillus sakei subsp. sakei)).